The following is a 60-amino-acid chain: MRKLRGGQTKETRKQKQERREENLKIQQQLKTIVLPICGVFLMCIVVYVFLKTRPRFEEL.

Positions 1–21 (MRKLRGGQTKETRKQKQERRE) are disordered. Positions 8–21 (QTKETRKQKQERRE) are enriched in basic and acidic residues. Residues 10–33 (KETRKQKQERREENLKIQQQLKTI) are a coiled coil. A helical membrane pass occupies residues 32–52 (TIVLPICGVFLMCIVVYVFLK).

It belongs to the SMCO4 family.

Its subcellular location is the membrane. This Aedes aegypti (Yellowfever mosquito) protein is Single-pass membrane and coiled-coil domain-containing protein 4 homolog.